The following is a 108-amino-acid chain: uncharacterized protein (108 aa).

The first 16 residues, 1–16 (MKKLILIAIMASGLVA), serve as a signal peptide directing secretion. C17 is lipidated: N-palmitoyl cysteine. A lipid anchor (S-diacylglycerol cysteine) is attached at C17.

It is found in the cell membrane. This is an uncharacterized protein from Escherichia coli (strain K12).